Here is a 403-residue protein sequence, read N- to C-terminus: Formin-like protein 21b (403 aa).

The FH2 domain occupies 1–380 (MELLFTATLL…KAAKEAEMEK (380 aa)). Residues 373–403 (AKEAEMEKTKKRVSLTNKKASGVGEEESCLI) are disordered.

The protein belongs to the formin-like family. Class-II subfamily.

This chain is Formin-like protein 21b (FH21B), found in Arabidopsis thaliana (Mouse-ear cress).